A 425-amino-acid chain; its full sequence is MQIYMVGGAVRDRLLGRPVNDHDWVVVGATPDDMVARGYLPVGRDFPVFLHPETREEYALARTERKSGRGYRGFVVQTSPDVTLEEDLSRRDLTINAIAASAAWTGAEDLFDPYGGARDLQARVLRHVTDSFREDPVRILRVARFAARFTDFTVAPETMQLMREMVHDGEADHLVPERVWQELARGLMEPQPSRMFDVLRDCGALAVVLPEVERLWGVPQRPEYHPEVDTGVHLMMVLDMAAHLQAPLTVRFACLTHDLGKGTTPHDVLPRHIGHEQRSARLLKAVCERLRVPVECRELADVVAREHGNIHRSGDLGAAALVRLLERCDAIRKPARLDEILLACECDARGRLGFADRPYPQRARINAALAAVQSVTTSSVAAHAAQLGLSGPKVGEMIHAARVQAVADWLHATAQPAPEPQGNAG.

Positions 8 and 11 each coordinate ATP. The CTP site is built by Gly-8 and Arg-11. Positions 21 and 23 each coordinate Mg(2+). 3 residues coordinate ATP: Arg-91, Arg-141, and Arg-144. CTP-binding residues include Arg-91, Arg-141, and Arg-144. One can recognise an HD domain in the interval 230–331 (TGVHLMMVLD…VRLLERCDAI (102 aa)).

It belongs to the tRNA nucleotidyltransferase/poly(A) polymerase family. Bacterial CCA-adding enzyme type 1 subfamily. As to quaternary structure, monomer. Can also form homodimers and oligomers. It depends on Mg(2+) as a cofactor. Ni(2+) is required as a cofactor.

The catalysed reaction is a tRNA precursor + 2 CTP + ATP = a tRNA with a 3' CCA end + 3 diphosphate. It catalyses the reaction a tRNA with a 3' CCA end + 2 CTP + ATP = a tRNA with a 3' CCACCA end + 3 diphosphate. Catalyzes the addition and repair of the essential 3'-terminal CCA sequence in tRNAs without using a nucleic acid template. Adds these three nucleotides in the order of C, C, and A to the tRNA nucleotide-73, using CTP and ATP as substrates and producing inorganic pyrophosphate. tRNA 3'-terminal CCA addition is required both for tRNA processing and repair. Also involved in tRNA surveillance by mediating tandem CCA addition to generate a CCACCA at the 3' terminus of unstable tRNAs. While stable tRNAs receive only 3'-terminal CCA, unstable tRNAs are marked with CCACCA and rapidly degraded. The sequence is that of Multifunctional CCA protein from Acidovorax sp. (strain JS42).